The sequence spans 103 residues: UPF0145 protein EF_0241 (103 aa).

It belongs to the UPF0145 family.

This is UPF0145 protein EF_0241 from Enterococcus faecalis (strain ATCC 700802 / V583).